Here is a 433-residue protein sequence, read N- to C-terminus: MTESVRLPVARLKPSTVALPGSKSISNRTLLLAALSDNACEIHSLLKSDDTDRMLEALDKLGVQIEYLAEDRLKVHGTGGRFPNRTADLFLGNAGTAFRPLTAALAVLGGDYHLHGVPRMHERPIGDLADALRIAGADVEYLGKEHYPPLHIGKRQDNGERVIPIKGNVSSQFLTALLMALPLTGQAFEIRMVGELISKPYIDITLKLMAQFGVQVANENYRVFKIPADAHYHAPEHLHVEGDASSASYFLAAGLIAATPVRVTGIGANSIQGDVAFARELEKIGADVVWGENFVEVSRPKERAVQSFDLDANHIPDAAMTLAIVALATGQTCTLRNIGSWRVKETDRIAAMANELRKLGAKVVEEAEAIHITPPKTLTPDAVIDTYDDHRMAMCFSLVSLLGVPVVINDPKCTHKTFPTYFDVFSSLTETTE.

3-phosphoshikimate contacts are provided by lysine 23, serine 24, and arginine 28. Residue lysine 23 participates in phosphoenolpyruvate binding. Residues glycine 95 and arginine 123 each contribute to the phosphoenolpyruvate site. Positions 170, 171, 172, 198, 317, and 344 each coordinate 3-phosphoshikimate. Glutamine 172 is a phosphoenolpyruvate binding site. Aspartate 317 functions as the Proton acceptor in the catalytic mechanism. Phosphoenolpyruvate-binding residues include arginine 348, arginine 391, and lysine 416.

The protein belongs to the EPSP synthase family. Monomer.

It is found in the cytoplasm. It catalyses the reaction 3-phosphoshikimate + phosphoenolpyruvate = 5-O-(1-carboxyvinyl)-3-phosphoshikimate + phosphate. The protein operates within metabolic intermediate biosynthesis; chorismate biosynthesis; chorismate from D-erythrose 4-phosphate and phosphoenolpyruvate: step 6/7. Its function is as follows. Catalyzes the transfer of the enolpyruvyl moiety of phosphoenolpyruvate (PEP) to the 5-hydroxyl of shikimate-3-phosphate (S3P) to produce enolpyruvyl shikimate-3-phosphate and inorganic phosphate. In Neisseria meningitidis serogroup C / serotype 2a (strain ATCC 700532 / DSM 15464 / FAM18), this protein is 3-phosphoshikimate 1-carboxyvinyltransferase.